Here is a 150-residue protein sequence, read N- to C-terminus: Lipoprotein signal peptidase (150 aa).

A run of 2 helical transmembrane segments spans residues 59 to 79 (VFVG…RYLP) and 84 to 101 (LLRL…GNLI). Catalysis depends on residues D111 and D125. Residues 117–137 (IWPVFNLADMAIVFGVIILCW) form a helical membrane-spanning segment.

Belongs to the peptidase A8 family.

Its subcellular location is the cell membrane. The enzyme catalyses Release of signal peptides from bacterial membrane prolipoproteins. Hydrolyzes -Xaa-Yaa-Zaa-|-(S,diacylglyceryl)Cys-, in which Xaa is hydrophobic (preferably Leu), and Yaa (Ala or Ser) and Zaa (Gly or Ala) have small, neutral side chains.. It functions in the pathway protein modification; lipoprotein biosynthesis (signal peptide cleavage). Functionally, this protein specifically catalyzes the removal of signal peptides from prolipoproteins. The sequence is that of Lipoprotein signal peptidase from Moorella thermoacetica (strain ATCC 39073 / JCM 9320).